The primary structure comprises 218 residues: UPF0301 protein RPB_4502 (218 aa).

A disordered region spans residues 1–26 (MVTKSKRPKSGDRSGREPGNAGPIEQ).

The protein belongs to the UPF0301 (AlgH) family.

The polypeptide is UPF0301 protein RPB_4502 (Rhodopseudomonas palustris (strain HaA2)).